We begin with the raw amino-acid sequence, 234 residues long: Endonuclease V (234 aa).

Asp-42 and Asp-108 together coordinate Mg(2+).

This sequence belongs to the endonuclease V family. It depends on Mg(2+) as a cofactor.

Its subcellular location is the cytoplasm. It catalyses the reaction Endonucleolytic cleavage at apurinic or apyrimidinic sites to products with a 5'-phosphate.. Functionally, DNA repair enzyme involved in the repair of deaminated bases. Selectively cleaves double-stranded DNA at the second phosphodiester bond 3' to a deoxyinosine leaving behind the intact lesion on the nicked DNA. This chain is Endonuclease V, found in Geotalea uraniireducens (strain Rf4) (Geobacter uraniireducens).